Reading from the N-terminus, the 840-residue chain is N-acetyltransferase ESCO1 (840 aa).

Over residues 1–25 the composition is skewed to basic and acidic residues; sequence MMSIQEKSKENSSKVTKKSDDKNSE. The disordered stretch occupies residues 1–188; it reads MMSIQEKSKE…VLEVKSDSKE (188 aa). 3 stretches are compositionally biased toward polar residues: residues 46–58, 65–74, and 81–96; these read KSQA…SKIN, RMSTRSSKAA, and KSIN…YSQE. A compositionally biased stretch (basic and acidic residues) spans 131–140; sequence VSRRSLRSRE. A compositionally biased stretch (polar residues) spans 141 to 153; that stretch reads IQGQVQAVKQSLP. A compositionally biased stretch (low complexity) spans 161 to 170; that stretch reads SSTQSKSNKT. Over residues 178-188 the composition is skewed to basic and acidic residues; that stretch reads KVLEVKSDSKE. A Phosphoserine modification is found at Ser200. 2 disordered regions span residues 221–300 and 318–338; these read TQGS…KSKR and NVEV…KPTE. A compositionally biased stretch (polar residues) spans 267–278; it reads HTQVNTNTTLPK. The span at 319 to 338 shows a compositional bias: basic and acidic residues; the sequence is VEVKKESSQMESVKEEKPTE. A Glycyl lysine isopeptide (Lys-Gly) (interchain with G-Cter in SUMO2) cross-link involves residue Lys332. Ser412 is subject to Phosphoserine. 2 disordered regions span residues 486 to 505 and 542 to 582; these read ANEI…HSFD and TGEN…KCNS. The segment covering 551-565 has biased composition (polar residues); sequence APQQHSILSNQTSKS. The CCHH-type zinc-finger motif lies at 617–641; the sequence is VSCNVCGMLYTASNPEDETQHLLFH. Acetyl-CoA is bound by residues 772–774, 780–785, and 812–814; these read IWV, RKKIAS, and TPD.

Belongs to the acetyltransferase family. ECO subfamily. In terms of assembly, the subunit structure is controversial. Monomer. Homodimer. Post-translationally, phosphorylated during mitosis, when associated with chromosomes. In terms of tissue distribution, widely expressed. Expressed in heart, brain, liver, placenta, lung, kidney and pancreas. Highly expressed in muscle.

It localises to the nucleus. The protein localises to the chromosome. It catalyses the reaction L-lysyl-[protein] + acetyl-CoA = N(6)-acetyl-L-lysyl-[protein] + CoA + H(+). In terms of biological role, acetyltransferase required for the establishment of sister chromatid cohesion. Couples the processes of cohesion and DNA replication to ensure that only sister chromatids become paired together. In contrast to the structural cohesins, the deposition and establishment factors are required only during S phase. Acts by mediating the acetylation of cohesin component SMC3. This Homo sapiens (Human) protein is N-acetyltransferase ESCO1 (ESCO1).